The following is a 608-amino-acid chain: Threonine--tRNA ligase (608 aa).

The editing domain stretch occupies residues 1-145 (MKTLLIHAKH…TIKPGRRVRP (145 aa)). Catalytic stretches follow at residues 192–489 (PKYL…PSLP) and 193–489 (KYLE…PSLP). Zn(2+) contacts are provided by C286, H337, and H458.

It belongs to the class-II aminoacyl-tRNA synthetase family. In terms of assembly, homodimer. Requires Zn(2+) as cofactor.

Its subcellular location is the cytoplasm. It catalyses the reaction tRNA(Thr) + L-threonine + ATP = L-threonyl-tRNA(Thr) + AMP + diphosphate + H(+). Its function is as follows. Catalyzes the attachment of threonine to tRNA(Thr) in a two-step reaction: L-threonine is first activated by ATP to form Thr-AMP and then transferred to the acceptor end of tRNA(Thr). Also edits incorrectly charged L-seryl-tRNA(Thr). The sequence is that of Threonine--tRNA ligase from Thermofilum pendens (strain DSM 2475 / Hrk 5).